Reading from the N-terminus, the 345-residue chain is Phenylalanine--tRNA ligase alpha subunit (345 aa).

Position 253 (Glu253) interacts with Mg(2+).

The protein belongs to the class-II aminoacyl-tRNA synthetase family. Phe-tRNA synthetase alpha subunit type 1 subfamily. Tetramer of two alpha and two beta subunits. The cofactor is Mg(2+).

The protein resides in the cytoplasm. The enzyme catalyses tRNA(Phe) + L-phenylalanine + ATP = L-phenylalanyl-tRNA(Phe) + AMP + diphosphate + H(+). The chain is Phenylalanine--tRNA ligase alpha subunit from Nitratidesulfovibrio vulgaris (strain DSM 19637 / Miyazaki F) (Desulfovibrio vulgaris).